Reading from the N-terminus, the 271-residue chain is MSHIQRETSCSRPRLNSNLDADLYGYKWARDNVGQSGATIYRLYGKPDAPELFLKHGKGSVANDVTDEMVRLNWLTEFMPLPTIKHFIRTPDDAWLLTTAIPGKTAFQVLEEYPDSGENIVDALAVFLRRLHSIPVCNCPFNSDRVFRLAQAQSRMNNGLVDASDFDDERNGWPVEQVWKEMHKLLPFSPDSVVTHGDFSLDNLIFDEGKLIGCIDVGRVGIADRYQDLAILWNCLGEFSPSLQKRLFQKYGIDNPDMNKLQFHLMLDEFF.

Catalysis depends on D198, which acts as the Proton acceptor.

Belongs to the aminoglycoside phosphotransferase family.

The enzyme catalyses kanamycin A + ATP = kanamycin 3'-phosphate + ADP + H(+). Resistance to kanamycin and structurally-related aminoglycosides, including amikacin. The protein is Aminoglycoside 3'-phosphotransferase (aphA1) of Escherichia coli.